The primary structure comprises 668 residues: Methionine--tRNA ligase (668 aa).

Residues 11-21 (AYTNGPLHIGH) carry the 'HIGH' region motif. Residues C146, C149, C159, and C162 each contribute to the Zn(2+) site. Positions 332-336 (KMSTS) match the 'KMSKS' region motif. T335 is an ATP binding site. The tRNA-binding domain maps to 567-668 (EFNRLDLRVG…REVEPGERIR (102 aa)).

This sequence belongs to the class-I aminoacyl-tRNA synthetase family. MetG type 1 subfamily. Homodimer. It depends on Zn(2+) as a cofactor.

It localises to the cytoplasm. It catalyses the reaction tRNA(Met) + L-methionine + ATP = L-methionyl-tRNA(Met) + AMP + diphosphate. Is required not only for elongation of protein synthesis but also for the initiation of all mRNA translation through initiator tRNA(fMet) aminoacylation. The chain is Methionine--tRNA ligase from Methanopyrus kandleri (strain AV19 / DSM 6324 / JCM 9639 / NBRC 100938).